Consider the following 141-residue polypeptide: MEQTLSIIKPDSVGKAHIGEIIAIFEKSGFRIAAMKMLHLSVKEAEGFYAVHKSRPFFQELVDFMISGPVVVMVLEGNNAVARNREIMGATNPQEAAPGTIRAQFGESIGINAVHGSDSLENAAIEINYFFSKVEIVNSAA.

ATP is bound by residues Lys9, Phe57, Arg85, Thr91, Arg102, and Asn112. The Pros-phosphohistidine intermediate role is filled by His115.

This sequence belongs to the NDK family. As to quaternary structure, homotetramer. Mg(2+) serves as cofactor.

It localises to the cytoplasm. It catalyses the reaction a 2'-deoxyribonucleoside 5'-diphosphate + ATP = a 2'-deoxyribonucleoside 5'-triphosphate + ADP. The catalysed reaction is a ribonucleoside 5'-diphosphate + ATP = a ribonucleoside 5'-triphosphate + ADP. Functionally, major role in the synthesis of nucleoside triphosphates other than ATP. The ATP gamma phosphate is transferred to the NDP beta phosphate via a ping-pong mechanism, using a phosphorylated active-site intermediate. In Chlamydia abortus (strain DSM 27085 / S26/3) (Chlamydophila abortus), this protein is Nucleoside diphosphate kinase.